A 230-amino-acid polypeptide reads, in one-letter code: RNA chaperone ProQ (230 aa).

A disordered region spans residues 104-176 (AEAKARVQAQ…APRQNTEKLT (73 aa)). Residues 115–132 (AEQRAKKREAEGDKETSK) are compositionally biased toward basic and acidic residues.

Belongs to the ProQ family.

It localises to the cytoplasm. RNA chaperone with significant RNA binding, RNA strand exchange and RNA duplexing activities. May regulate ProP activity through an RNA-based, post-transcriptional mechanism. This Proteus mirabilis (strain HI4320) protein is RNA chaperone ProQ.